We begin with the raw amino-acid sequence, 45 residues long: Photosystem II reaction center protein K (45 aa).

Residues 1–8 constitute a propeptide that is removed on maturation; that stretch reads MDFALLLA. The helical transmembrane segment at 24 to 44 threads the bilayer; that stretch reads LPLIPLFFLLLAFVWQAAVGF.

Belongs to the PsbK family. In terms of assembly, PSII is composed of 1 copy each of membrane proteins PsbA, PsbB, PsbC, PsbD, PsbE, PsbF, PsbH, PsbI, PsbJ, PsbK, PsbL, PsbM, PsbT, PsbX, PsbY, PsbZ, Psb30/Ycf12, peripheral proteins PsbO, CyanoQ (PsbQ), PsbU, PsbV and a large number of cofactors. It forms dimeric complexes.

Its subcellular location is the cellular thylakoid membrane. In terms of biological role, one of the components of the core complex of photosystem II (PSII). PSII is a light-driven water:plastoquinone oxidoreductase that uses light energy to abstract electrons from H(2)O, generating O(2) and a proton gradient subsequently used for ATP formation. It consists of a core antenna complex that captures photons, and an electron transfer chain that converts photonic excitation into a charge separation. This is Photosystem II reaction center protein K from Gloeothece citriformis (strain PCC 7424) (Cyanothece sp. (strain PCC 7424)).